The chain runs to 201 residues: FMN-dependent NADH:quinone oxidoreductase (201 aa).

FMN-binding positions include 92-95 (MWNL) and 136-139 (STGG).

This sequence belongs to the azoreductase type 1 family. Homodimer. FMN is required as a cofactor.

The enzyme catalyses 2 a quinone + NADH + H(+) = 2 a 1,4-benzosemiquinone + NAD(+). It carries out the reaction N,N-dimethyl-1,4-phenylenediamine + anthranilate + 2 NAD(+) = 2-(4-dimethylaminophenyl)diazenylbenzoate + 2 NADH + 2 H(+). Its function is as follows. Quinone reductase that provides resistance to thiol-specific stress caused by electrophilic quinones. Also exhibits azoreductase activity. Catalyzes the reductive cleavage of the azo bond in aromatic azo compounds to the corresponding amines. This is FMN-dependent NADH:quinone oxidoreductase from Coprothermobacter proteolyticus (strain ATCC 35245 / DSM 5265 / OCM 4 / BT).